Reading from the N-terminus, the 514-residue chain is Na(+)/H(+) antiporter NhaB (514 aa).

Transmembrane regions (helical) follow at residues 23–43, 63–83, 97–117, 120–140, 144–164, 202–222, 238–258, 303–323, 357–377, 391–411, 447–467, and 475–495; these read LALL…PFIA, PLLP…TSAA, LLLM…LFIF, LLLS…AAAF, FLDA…FYGI, LMMH…VGEP, FFLR…LTCM, AVIG…VGLI, LTVF…APII, LFYL…VGTI, ATPN…APLI, and VWMA…CVEF.

This sequence belongs to the NhaB Na(+)/H(+) (TC 2.A.34) antiporter family.

Its subcellular location is the cell inner membrane. The enzyme catalyses 2 Na(+)(in) + 3 H(+)(out) = 2 Na(+)(out) + 3 H(+)(in). In terms of biological role, na(+)/H(+) antiporter that extrudes sodium in exchange for external protons. This chain is Na(+)/H(+) antiporter NhaB, found in Salmonella choleraesuis (strain SC-B67).